We begin with the raw amino-acid sequence, 430 residues long: Adenylosuccinate synthetase (430 aa).

Residues 12–18 and 40–42 contribute to the GTP site; these read GDEGKGK and GHT. Aspartate 13 (proton acceptor) is an active-site residue. Mg(2+)-binding residues include aspartate 13 and glycine 40. Residues 13 to 16, 38 to 41, threonine 130, arginine 144, glutamine 224, threonine 239, and arginine 303 each bind IMP; these read DEGK and NAGH. Residue histidine 41 is the Proton donor of the active site. 299 to 305 serves as a coordination point for substrate; that stretch reads VNTGRKR. GTP-binding positions include arginine 305, 331-333, and 413-415; these read KLD and STS.

Belongs to the adenylosuccinate synthetase family. As to quaternary structure, homodimer. Mg(2+) serves as cofactor.

Its subcellular location is the cytoplasm. It catalyses the reaction IMP + L-aspartate + GTP = N(6)-(1,2-dicarboxyethyl)-AMP + GDP + phosphate + 2 H(+). The protein operates within purine metabolism; AMP biosynthesis via de novo pathway; AMP from IMP: step 1/2. In terms of biological role, plays an important role in the de novo pathway of purine nucleotide biosynthesis. Catalyzes the first committed step in the biosynthesis of AMP from IMP. The polypeptide is Adenylosuccinate synthetase (Nitrobacter hamburgensis (strain DSM 10229 / NCIMB 13809 / X14)).